Here is a 191-residue protein sequence, read N- to C-terminus: tRNA-specific adenosine deaminase 2 (191 aa).

One can recognise a CMP/dCMP-type deaminase domain in the interval 20 to 145 (EETEKWMEQA…SVLDIASADL (126 aa)). His71 serves as a coordination point for Zn(2+). The active-site Proton donor is Glu73. Zn(2+)-binding residues include Cys107 and Cys110.

This sequence belongs to the cytidine and deoxycytidylate deaminase family. ADAT2 subfamily. Zn(2+) serves as cofactor.

It carries out the reaction adenosine(34) in tRNA + H2O + H(+) = inosine(34) in tRNA + NH4(+). Functionally, probably participates in deamination of adenosine-34 to inosine in many tRNAs. The chain is tRNA-specific adenosine deaminase 2 (DEADC1) from Bos taurus (Bovine).